The chain runs to 144 residues: uncharacterized protein (144 aa).

The signal sequence occupies residues 1-16 (MRKFLIVLLLPLLVLA).

This is an uncharacterized protein from Aquifex aeolicus (strain VF5).